We begin with the raw amino-acid sequence, 686 residues long: L-type lectin-domain containing receptor kinase VII.1 (686 aa).

An N-terminal signal peptide occupies residues 1 to 20 (MKALLFLLTLFLILPNPISA). Residues 21 to 256 (IDFIFNGFND…SHKILAWSFS (236 aa)) are legume-lectin like. Over 21-286 (IDFIFNGFND…PKDSIVKAKW (266 aa)) the chain is Extracellular. N-linked (GlcNAc...) asparagine glycosylation is found at asparagine 29, asparagine 34, asparagine 52, asparagine 64, asparagine 111, asparagine 123, asparagine 168, asparagine 203, asparagine 224, and asparagine 259. The helical transmembrane segment at 287–307 (FVFVLVLICFLVVALVGLVLF) threads the bilayer. Topologically, residues 308–686 (AVVRKRLERA…SWNSSILEGR (379 aa)) are cytoplasmic. Positions 347-628 (FDEKNVIGIG…VFEGDKAEIF (282 aa)) constitute a Protein kinase domain. ATP contacts are provided by residues 353 to 361 (IGIGGNGKV) and lysine 376. The Proton acceptor role is filled by aspartate 475.

The protein in the C-terminal section; belongs to the protein kinase superfamily. Ser/Thr protein kinase family. This sequence in the N-terminal section; belongs to the leguminous lectin family.

The protein localises to the cell membrane. It catalyses the reaction L-seryl-[protein] + ATP = O-phospho-L-seryl-[protein] + ADP + H(+). The enzyme catalyses L-threonyl-[protein] + ATP = O-phospho-L-threonyl-[protein] + ADP + H(+). The protein is L-type lectin-domain containing receptor kinase VII.1 (LECRK71) of Arabidopsis thaliana (Mouse-ear cress).